We begin with the raw amino-acid sequence, 476 residues long: tRNA-2-methylthio-N(6)-dimethylallyladenosine synthase (476 aa).

Residues 1–14 (MTEVVHLHMPEEAR) show a composition bias toward basic and acidic residues. Positions 1–20 (MTEVVHLHMPEEARATQSRD) are disordered. One can recognise an MTTase N-terminal domain in the interval 26 to 147 (RRYYVWTVGC…APNPIYQLEE (122 aa)). Positions 35, 71, 105, 170, 174, and 177 each coordinate [4Fe-4S] cluster. The region spanning 156–390 (DHPPVSVHVP…ERLQEQIAAE (235 aa)) is the Radical SAM core domain. Residues 393-453 (ARFLHQTVEV…PWSLQGVLAR (61 aa)) enclose the TRAM domain.

Belongs to the methylthiotransferase family. MiaB subfamily. In terms of assembly, monomer. The cofactor is [4Fe-4S] cluster.

It localises to the cytoplasm. The enzyme catalyses N(6)-dimethylallyladenosine(37) in tRNA + (sulfur carrier)-SH + AH2 + 2 S-adenosyl-L-methionine = 2-methylsulfanyl-N(6)-dimethylallyladenosine(37) in tRNA + (sulfur carrier)-H + 5'-deoxyadenosine + L-methionine + A + S-adenosyl-L-homocysteine + 2 H(+). Its function is as follows. Catalyzes the methylthiolation of N6-(dimethylallyl)adenosine (i(6)A), leading to the formation of 2-methylthio-N6-(dimethylallyl)adenosine (ms(2)i(6)A) at position 37 in tRNAs that read codons beginning with uridine. The protein is tRNA-2-methylthio-N(6)-dimethylallyladenosine synthase of Roseiflexus sp. (strain RS-1).